The following is a 304-amino-acid chain: Protoheme IX farnesyltransferase (304 aa).

A run of 9 helical transmembrane segments spans residues 32-52 (VVALMLLTVLVGMCLAVPGSV), 54-74 (LQPLVIGMIGIGMMAGAAAAF), 104-124 (ALTFAISLAALGFVLLYTLVN), 126-146 (LTAWLTFASLIGYALVYTAYL), 154-174 (IVVGGLAGAMPPLLGWTSVTG), 180-200 (ALLLVIIIFAWTPPHFWALAI), 226-246 (CILLYTVLLAIACLLPVLVGM), 247-267 (CGPVYLVGSTLLSCGFIYKAW), and 284-304 (FSIYHLMLLFLVLLVDHYLWV).

It belongs to the UbiA prenyltransferase family. Protoheme IX farnesyltransferase subfamily.

It is found in the cell inner membrane. It catalyses the reaction heme b + (2E,6E)-farnesyl diphosphate + H2O = Fe(II)-heme o + diphosphate. It functions in the pathway porphyrin-containing compound metabolism; heme O biosynthesis; heme O from protoheme: step 1/1. In terms of biological role, converts heme B (protoheme IX) to heme O by substitution of the vinyl group on carbon 2 of heme B porphyrin ring with a hydroxyethyl farnesyl side group. In Shewanella sediminis (strain HAW-EB3), this protein is Protoheme IX farnesyltransferase.